A 476-amino-acid chain; its full sequence is MSPQTETKASVGFKAGVKDYKLTYYTPDYETKDTDILAAFRVTPQPGVPPEEAGAAVAAESSTGTWTTVWTDGLTSLDRYKGRCYGIEPVLGEENQYIAYVAYPLDLFEEGSVTNMFTSIVGNVFGFKALRALRLEDLRIPTAYVKTFQGPPHGIQVDRDKLNKYGRPLLGCTIKPKLGLSAKNYGRAVYECLRGGLDFTKDDENVNSQPFMRWRDRFLFCAEAIYKAQAETGEIKGHYLNATAGTCEEMMKRAVFARELAVPIVMHDYLTGGCNATTSLAHYCRDNGLLLHIQRAMHAVIDRQKNHGMHFRVLAKALRMSGGDHIHAGTVVGKLEGEREITLGFVDLLRDDFIKKDRSRGIYFTQDWVSLPGVLPVASGGIHVWHMPALTEIFGDDSVLQFGGGTLGHPWGNAPGPVANRVALEACVQARNDGRDLAIHGNEIIREACKWSPELAAACEVWKEIKFEFPALDTFV.

Positions 1 to 2 (MS) are excised as a propeptide. An N-acetylproline modification is found at proline 3. N6,N6,N6-trimethyllysine is present on lysine 14. Substrate is bound by residues asparagine 123 and threonine 173. Residue lysine 175 is the Proton acceptor of the active site. Residue lysine 177 coordinates substrate. Lysine 201, aspartate 203, and glutamate 204 together coordinate Mg(2+). The residue at position 201 (lysine 201) is an N6-carboxylysine. Positions 295, 327, and 379 each coordinate substrate.

The protein belongs to the RuBisCO large chain family. Type I subfamily. Heterohexadecamer of 8 large chains and 8 small chains; disulfide-linked. The disulfide link is formed within the large subunit homodimers. Requires Mg(2+) as cofactor. In terms of processing, the disulfide bond which can form in the large chain dimeric partners within the hexadecamer appears to be associated with oxidative stress and protein turnover.

The protein resides in the plastid. It localises to the chloroplast. It carries out the reaction 2 (2R)-3-phosphoglycerate + 2 H(+) = D-ribulose 1,5-bisphosphate + CO2 + H2O. It catalyses the reaction D-ribulose 1,5-bisphosphate + O2 = 2-phosphoglycolate + (2R)-3-phosphoglycerate + 2 H(+). RuBisCO catalyzes two reactions: the carboxylation of D-ribulose 1,5-bisphosphate, the primary event in carbon dioxide fixation, as well as the oxidative fragmentation of the pentose substrate in the photorespiration process. Both reactions occur simultaneously and in competition at the same active site. This Barnadesia caryophylla (Xenophontia caryophylla) protein is Ribulose bisphosphate carboxylase large chain.